We begin with the raw amino-acid sequence, 535 residues long: Ribonuclease Y (535 aa).

A helical membrane pass occupies residues 30–50 (IWALPALVIGLAIGAGIGILI). Residues 225 to 285 (TVSTVALPSE…VRREVARLAL (61 aa)) enclose the KH domain. The 94-residue stretch at 351-444 (VLQHSLECAL…VQAVDAISGG (94 aa)) folds into the HD domain.

This sequence belongs to the RNase Y family.

The protein resides in the cell membrane. Functionally, endoribonuclease that initiates mRNA decay. In Roseiflexus sp. (strain RS-1), this protein is Ribonuclease Y.